A 56-amino-acid polypeptide reads, in one-letter code: Large ribosomal subunit protein bL32 (56 aa).

The disordered stretch occupies residues 1-35 (MAVQQNKPTRSKRGMRRSHDALTATHVSVDKTSGE).

Belongs to the bacterial ribosomal protein bL32 family.

In Proteus mirabilis (strain HI4320), this protein is Large ribosomal subunit protein bL32.